Reading from the N-terminus, the 544-residue chain is Phosphomannomutase (544 aa).

The active-site Phosphoserine intermediate is the Ser145. Residues Ser145, Asp297, Asp299, and Asp301 each contribute to the Mg(2+) site.

It belongs to the phosphohexose mutase family. Mg(2+) is required as a cofactor.

It carries out the reaction alpha-D-mannose 1-phosphate = D-mannose 6-phosphate. This Mycoplasmoides pirum (Mycoplasma pirum) protein is Phosphomannomutase (manB).